The following is a 90-amino-acid chain: RNA-binding protein Hfq (90 aa).

Residues 11–71 (DVFLNSVRKT…ISTIMPAAPV (61 aa)) form the Sm domain.

Belongs to the Hfq family. As to quaternary structure, homohexamer.

Functionally, RNA chaperone that binds small regulatory RNA (sRNAs) and mRNAs to facilitate mRNA translational regulation in response to envelope stress, environmental stress and changes in metabolite concentrations. Also binds with high specificity to tRNAs. The sequence is that of RNA-binding protein Hfq from Maricaulis maris (strain MCS10) (Caulobacter maris).